Consider the following 422-residue polypeptide: Zinc finger protein Gfi-1 (422 aa).

Residues 1-20 (MPRSFLVKSKKAHSYHQPRS) are SNAG domain. The tract at residues 1-107 (MPRSFLVKSK…SPASEKSVCP (107 aa)) is disordered. Residue serine 20 is modified to Phosphoserine. A compositionally biased stretch (low complexity) spans 34–47 (APGGADGTSSAGGA). At serine 56 the chain carries Phosphoserine. Residues 57–72 (PESQLTEAPDRSSASP) show a composition bias toward polar residues. The tract at residues 140–257 (RPCAALDRGA…LLLGGGSYKC (118 aa)) is required for interaction with RELA. C2H2-type zinc fingers lie at residues 255–278 (YKCI…RRSH), 284–306 (FACE…KAVH), 312–334 (FDCK…LLIH), 340–362 (YPCQ…TFIH), 368–390 (HKCQ…SRKH), and 396–419 (FGCD…ETQH).

In terms of assembly, interacts with U2AF1L4. Component of RCOR-GFI-KDM1A-HDAC complexes. Interacts directly with RCOR1, KDM1A and HDAC2. Also interacts with HDAC1 and HDAC3. Interacts (via the zinc-finger domain) with ARIH2; the interaction prevents GFI1 ubiquitination and proteasomal degradation. Interacts with PIAS3; the interaction relieves the inhibitory effect of PIAS3 on STAT3-mediated transcriptional activity. Forms a complex with EHMT2 and HDAC1 to promote 'Lys-9' dimethylation of H3 (H3K9Me2) and repress expression of target genes. Interacts directly with EHMT2. Component of the GFI1-AJUBA-HDAC1 repressor complex. Interacts directly with AJUBA (via ITS LIM domains); the interaction results in the HDAC-dependent corepression of a subset of GFI1 target genes and, occurs independently of the SNAG domain. Interacts with SPI1; the interaction inhibits SPI1 transcriptional activity targeted at macrophage-specific genes, repressing macrophage differentiation of myeloid progenitor cells and promoting granulocyte commitment. Interacts with RUNX1T1; the interaction represses HDAC-mediated transcriptional activity. Interacts with RELA; the interaction occurs on liposaccharide (LPS) stimulation and controls RELA DNA binding activity and regulates endotoxin-mediated TOLL-like receptor inflammatory response. Interacts (via the C-terminal zinc fingers) with ZBTB17; the interaction results in the recruitment of GFI1 to the CDKN1A/p21 and CDKNIB promoters and repression of transcription. Ubiquitinated.

It is found in the nucleus. In terms of biological role, transcription repressor essential for hematopoiesis. Functions in a cell-context and development-specific manner. Binds to 5'-TAAATCAC[AT]GCA-3' in the promoter region of a large number of genes. Component of several complexes, including the EHMT2-GFI1-HDAC1, AJUBA-GFI1-HDAC1 and RCOR-GFI-KDM1A-HDAC complexes, that suppress, via histone deacetylase (HDAC) recruitment, a number of genes implicated in multilineage blood cell development. Regulates neutrophil differentiation, promotes proliferation of lymphoid cells, and is required for granulocyte development. Inhibits SPI1 transcriptional activity at macrophage-specific genes, repressing macrophage differentiation of myeloid progenitor cells and promoting granulocyte commitment. Mediates, together with U2AF1L4, the alternative splicing of CD45 and controls T-cell receptor signaling. Regulates the endotoxin-mediated Toll-like receptor (TLR) inflammatory response by antagonizing RELA. Cooperates with CBFA2T2 to regulate ITGB1-dependent neurite growth. Controls cell-cycle progression by repressing CDKNIA/p21 transcription in response to TGFB1 via recruitment of GFI1 by ZBTB17 to the CDKNIA/p21 and CDKNIB promoters. Required for the maintenance of inner ear hair cells. In addition to its role in transcription, acts as a substrate adapter for PRMT1 in the DNA damage response: facilitates the recognition of TP53BP1 and MRE11 substrates by PRMT1, promoting their methylation and the DNA damage response. This is Zinc finger protein Gfi-1 (GFI1) from Canis lupus familiaris (Dog).